Reading from the N-terminus, the 712-residue chain is Ribosomal RNA large subunit methyltransferase K/L (712 aa).

The 112-residue stretch at 46-157 (GAYQALLHSR…REKLIVSLDL (112 aa)) folds into the THUMP domain.

This sequence belongs to the methyltransferase superfamily. RlmKL family.

Its subcellular location is the cytoplasm. It carries out the reaction guanosine(2445) in 23S rRNA + S-adenosyl-L-methionine = N(2)-methylguanosine(2445) in 23S rRNA + S-adenosyl-L-homocysteine + H(+). It catalyses the reaction guanosine(2069) in 23S rRNA + S-adenosyl-L-methionine = N(2)-methylguanosine(2069) in 23S rRNA + S-adenosyl-L-homocysteine + H(+). Its function is as follows. Specifically methylates the guanine in position 2445 (m2G2445) and the guanine in position 2069 (m7G2069) of 23S rRNA. The polypeptide is Ribosomal RNA large subunit methyltransferase K/L (Haemophilus ducreyi (strain 35000HP / ATCC 700724)).